A 266-amino-acid polypeptide reads, in one-letter code: Undecaprenyl-diphosphatase (266 aa).

8 helical membrane passes run 1–21 (MDTF…FLPI), 39–59 (QGLA…VLYF), 83–103 (SKLA…GFAL), 111–131 (LRGP…LWWA), 144–164 (TGWK…IPGT), 183–203 (AAAR…AILM), 218–238 (SLAL…HLFL), and 246–266 (MTPF…FIFM).

Belongs to the UppP family.

Its subcellular location is the cell inner membrane. It catalyses the reaction di-trans,octa-cis-undecaprenyl diphosphate + H2O = di-trans,octa-cis-undecaprenyl phosphate + phosphate + H(+). Catalyzes the dephosphorylation of undecaprenyl diphosphate (UPP). Confers resistance to bacitracin. In Shewanella woodyi (strain ATCC 51908 / MS32), this protein is Undecaprenyl-diphosphatase.